The chain runs to 596 residues: uncharacterized protein (596 aa).

Residues 7–26 (FWPILLGFTVLVAAGLYYVV) traverse the membrane as a helical segment.

The protein resides in the membrane. This is an uncharacterized protein from Sinorhizobium fredii (strain NBRC 101917 / NGR234).